The chain runs to 324 residues: Probable UDP-sugar transporter protein SLC35A4 (324 aa).

The Cytoplasmic portion of the chain corresponds to 1-18 (MSVEDGGLPGLGGPGQAR). Residues 19–39 (WTLMLLLSTATYGAHAPLLAL) form a helical membrane-spanning segment. Topologically, residues 40–52 (CHVDGRVPFRPSS) are lumenal. A helical membrane pass occupies residues 53-73 (AVLLTELTKLLLCALSLLVGW). Residues 74-85 (QAWPPRTPPWRQ) lie on the Cytoplasmic side of the membrane. A helical transmembrane segment spans residues 86 to 106 (AAPFALSALLYGANNNLVIHL). Topologically, residues 107–140 (QHYMDPSTYQVLSNLKIGSTALFYCLCLRRRLSA) are lumenal. Residues 141–161 (RQGLALLLLMAAGACYAAGGL) traverse the membrane as a helical segment. Topologically, residues 162–177 (RDPGSPLPESPSTAAS) are cytoplasmic. A helical membrane pass occupies residues 178–198 (GPVPLHVTAPGLLLLLLYCLI). Topologically, residues 199–214 (SGLSSVYTELLLKRQR) are lumenal. A helical membrane pass occupies residues 215 to 235 (LPLALQNLFLYTFGVLLNLGL). Residues 236-248 (HAGGGPGPGLLEG) are Cytoplasmic-facing. The chain crosses the membrane as a helical span at residues 249–271 (FSGWAALVVLSQALNGLLMSAVM). The Lumenal portion of the chain corresponds to 272 to 279 (KHGSSITR). A helical membrane pass occupies residues 280 to 300 (LFVVSCSLVVNAVLSAALLRL). Topologically, residues 301 to 324 (QLTAAFFLAALLIGLAVHLYYGSR) are cytoplasmic.

Belongs to the nucleotide-sugar transporter family. SLC35A subfamily. In terms of assembly, found in a complex with SLC35A2 and SLC35A3.

The protein resides in the golgi apparatus membrane. It catalyses the reaction CDP-L-ribitol(in) + CDP(out) = CDP-L-ribitol(out) + CDP(in). Mediates the transport of CDP-ribitol. Does not exhibit CMP-sialic acid, UDP-galactose and UDP-N-acetylglucosamine transport activity. The chain is Probable UDP-sugar transporter protein SLC35A4 from Sus scrofa (Pig).